We begin with the raw amino-acid sequence, 117 residues long: Large ribosomal subunit protein bL20c (117 aa).

The protein belongs to the bacterial ribosomal protein bL20 family.

The protein localises to the plastid. Its subcellular location is the chloroplast. Its function is as follows. Binds directly to 23S ribosomal RNA and is necessary for the in vitro assembly process of the 50S ribosomal subunit. It is not involved in the protein synthesizing functions of that subunit. This chain is Large ribosomal subunit protein bL20c, found in Lemna minor (Common duckweed).